Here is a 229-residue protein sequence, read N- to C-terminus: Cytochrome c oxidase subunit 2 (229 aa).

Topologically, residues methionine 1–serine 14 are mitochondrial intermembrane. Residues proline 15–methionine 45 form a helical membrane-spanning segment. Topologically, residues leucine 46–glutamine 58 are mitochondrial matrix. The helical transmembrane segment at glutamate 59 to methionine 86 threads the bilayer. Over aspartate 87 to serine 229 the chain is Mitochondrial intermembrane. Cu cation contacts are provided by histidine 160, cysteine 195, glutamate 197, cysteine 199, histidine 203, and methionine 206. Glutamate 197 contacts Mg(2+).

Belongs to the cytochrome c oxidase subunit 2 family. In terms of assembly, component of the cytochrome c oxidase (complex IV, CIV), a multisubunit enzyme composed of 14 subunits. The complex is composed of a catalytic core of 3 subunits MT-CO1, MT-CO2 and MT-CO3, encoded in the mitochondrial DNA, and 11 supernumerary subunits COX4I, COX5A, COX5B, COX6A, COX6B, COX6C, COX7A, COX7B, COX7C, COX8 and NDUFA4, which are encoded in the nuclear genome. The complex exists as a monomer or a dimer and forms supercomplexes (SCs) in the inner mitochondrial membrane with NADH-ubiquinone oxidoreductase (complex I, CI) and ubiquinol-cytochrome c oxidoreductase (cytochrome b-c1 complex, complex III, CIII), resulting in different assemblies (supercomplex SCI(1)III(2)IV(1) and megacomplex MCI(2)III(2)IV(2)). Found in a complex with TMEM177, COA6, COX18, COX20, SCO1 and SCO2. Interacts with TMEM177 in a COX20-dependent manner. Interacts with COX20. Interacts with COX16. It depends on Cu cation as a cofactor.

It localises to the mitochondrion inner membrane. It carries out the reaction 4 Fe(II)-[cytochrome c] + O2 + 8 H(+)(in) = 4 Fe(III)-[cytochrome c] + 2 H2O + 4 H(+)(out). In terms of biological role, component of the cytochrome c oxidase, the last enzyme in the mitochondrial electron transport chain which drives oxidative phosphorylation. The respiratory chain contains 3 multisubunit complexes succinate dehydrogenase (complex II, CII), ubiquinol-cytochrome c oxidoreductase (cytochrome b-c1 complex, complex III, CIII) and cytochrome c oxidase (complex IV, CIV), that cooperate to transfer electrons derived from NADH and succinate to molecular oxygen, creating an electrochemical gradient over the inner membrane that drives transmembrane transport and the ATP synthase. Cytochrome c oxidase is the component of the respiratory chain that catalyzes the reduction of oxygen to water. Electrons originating from reduced cytochrome c in the intermembrane space (IMS) are transferred via the dinuclear copper A center (CU(A)) of subunit 2 and heme A of subunit 1 to the active site in subunit 1, a binuclear center (BNC) formed by heme A3 and copper B (CU(B)). The BNC reduces molecular oxygen to 2 water molecules using 4 electrons from cytochrome c in the IMS and 4 protons from the mitochondrial matrix. This is Cytochrome c oxidase subunit 2 (MT-CO2) from Struthio camelus (Common ostrich).